Reading from the N-terminus, the 182-residue chain is Ribosome-recycling factor (182 aa).

Belongs to the RRF family.

The protein localises to the cytoplasm. Its function is as follows. Responsible for the release of ribosomes from messenger RNA at the termination of protein biosynthesis. May increase the efficiency of translation by recycling ribosomes from one round of translation to another. The sequence is that of Ribosome-recycling factor from Synechococcus sp. (strain WH7803).